Reading from the N-terminus, the 349-residue chain is Glycerol-3-phosphate dehydrogenase [NAD(+)], cytoplasmic (349 aa).

Residue Gly10 to Gly15 participates in NAD(+) binding. Lys120 is a substrate binding site. Ala153 is an NAD(+) binding site. Lys204 functions as the Proton acceptor in the catalytic mechanism. Position 269 (Arg269) interacts with NAD(+). Arg269–Asn270 lines the substrate pocket. Lys289 bears the N6-succinyllysine mark. NAD(+) contacts are provided by Lys296 and Gln298. At Tyr326 the chain carries Phosphotyrosine.

This sequence belongs to the NAD-dependent glycerol-3-phosphate dehydrogenase family. Homodimer.

Its subcellular location is the cytoplasm. It catalyses the reaction sn-glycerol 3-phosphate + NAD(+) = dihydroxyacetone phosphate + NADH + H(+). Its function is as follows. Has glycerol-3-phosphate dehydrogenase activity. This is Glycerol-3-phosphate dehydrogenase [NAD(+)], cytoplasmic (GPD1) from Bos taurus (Bovine).